We begin with the raw amino-acid sequence, 441 residues long: Ribulose bisphosphate carboxylase (441 aa).

The active-site Proton acceptor is the Lys160. Lys162 provides a ligand contact to substrate. 3 residues coordinate Mg(2+): Lys186, Asp188, and Glu189. N6-carboxylysine is present on Lys186. Catalysis depends on His278, which acts as the Proton acceptor. Substrate is bound by residues Arg279, His311, 364–366 (SGG), and 386–389 (QVGG).

It belongs to the RuBisCO large chain family. Type III subfamily. As to quaternary structure, homodimer. In contrast to form I RuBisCO, the form III RuBisCO is composed solely of large subunits. It depends on Mg(2+) as a cofactor.

The catalysed reaction is 2 (2R)-3-phosphoglycerate + 2 H(+) = D-ribulose 1,5-bisphosphate + CO2 + H2O. The enzyme catalyses D-ribulose 1,5-bisphosphate + O2 = 2-phosphoglycolate + (2R)-3-phosphoglycerate + 2 H(+). Its activity is regulated as follows. Reversibly inhibited by O(2). Functionally, catalyzes the addition of molecular CO(2) and H(2)O to ribulose 1,5-bisphosphate (RuBP), generating two molecules of 3-phosphoglycerate (3-PGA). Functions in an archaeal AMP degradation pathway, together with AMP phosphorylase and R15P isomerase. The protein is Ribulose bisphosphate carboxylase of Archaeoglobus fulgidus (strain ATCC 49558 / DSM 4304 / JCM 9628 / NBRC 100126 / VC-16).